Consider the following 952-residue polypeptide: Ubiquitin carboxyl-terminal hydrolase 15 (952 aa).

A2 is modified (N-acetylalanine). The mediates interaction with SART3 stretch occupies residues 2–223 (AEGGAADLDT…KNEDGTWPRG (222 aa)). The DUSP domain maps to 7-118 (ADLDTQRSDI…GQEPIARKVV (112 aa)). One can recognise a USP domain in the interval 260–904 (CGLSNLGNTC…AAYVLFYQRQ (645 aa)). Catalysis depends on C269, which acts as the Nucleophile. The residue at position 573 (T573) is a Phosphothreonine. Residues 597–665 (ETDGPLRCCE…GGDNDSENGL (69 aa)) form a disordered region. Residues 627–644 (METDEPDDESSQDQELPS) show a composition bias toward acidic residues. H862 serves as the catalytic Proton acceptor. Residues 923 to 952 (SAATGVPLESDEDSNDNDNDLENENCMHTN) form a disordered region. The span at 931-945 (ESDEDSNDNDNDLEN) shows a compositional bias: acidic residues. Phosphoserine is present on residues S932 and S936.

The protein belongs to the peptidase C19 family. In terms of assembly, a homodimer structure has been reported; however it is unclear whether the protein form a homodimer in vivo. Identified in a complex with the COP9 signalosome complex (CSN). Interacts with SMAD1, SMAD2 and SMAD3; the interaction is direct. Forms a complex with SMURF2 and SMAD7. Interacts with TGFBR1. Interacts with SART3; the interaction is direct. May interact with RNF20 and RNF40. May interact with PRKN. Interacts with INCA1. In terms of processing, phosphorylated. Phosphorylation protects against ubiquitination and subsequent degradation by the proteasome. Post-translationally, ubiquitinated, leading to degradation by the proteasome. As to expression, highly expressed in testis and spleen, and at lower level in other tissues.

The protein localises to the cytoplasm. It localises to the nucleus. Its subcellular location is the mitochondrion. It carries out the reaction Thiol-dependent hydrolysis of ester, thioester, amide, peptide and isopeptide bonds formed by the C-terminal Gly of ubiquitin (a 76-residue protein attached to proteins as an intracellular targeting signal).. In terms of biological role, hydrolase that removes conjugated ubiquitin from target proteins and regulates various pathways such as the TGF-beta receptor signaling, NF-kappa-B and RNF41/NRDP1-PRKN pathways. Acts as a key regulator of TGF-beta receptor signaling pathway, but the precise mechanism is still unclear: according to a report, acts by promoting deubiquitination of monoubiquitinated R-SMADs (SMAD1, SMAD2 and/or SMAD3), thereby alleviating inhibition of R-SMADs and promoting activation of TGF-beta target genes. According to another reports, regulates the TGF-beta receptor signaling pathway by mediating deubiquitination and stabilization of TGFBR1, leading to an enhanced TGF-beta signal. Able to mediate deubiquitination of monoubiquitinated substrates, 'Lys-27'-, 'Lys-48'- and 'Lys-63'-linked polyubiquitin chains. May also regulate gene expression and/or DNA repair through the deubiquitination of histone H2B. Acts as an inhibitor of mitophagy by counteracting the action of parkin (PRKN): hydrolyzes cleavage of 'Lys-48'- and 'Lys-63'-linked polyubiquitin chains attached by parkin on target proteins such as MFN2, thereby reducing parkin's ability to drive mitophagy. Acts as an associated component of COP9 signalosome complex (CSN) and regulates different pathways via this association: regulates NF-kappa-B by mediating deubiquitination of NFKBIA and deubiquitinates substrates bound to VCP. Involved in endosome organization by mediating deubiquitination of SQSTM1: ubiquitinated SQSTM1 forms a molecular bridge that restrains cognate vesicles in the perinuclear region and its deubiquitination releases target vesicles for fast transport into the cell periphery. Acts as a negative regulator of antifungal immunity by mediating 'Lys-27'-linked deubiquitination of CARD9, thereby inactivating CARD9. The polypeptide is Ubiquitin carboxyl-terminal hydrolase 15 (Usp15) (Rattus norvegicus (Rat)).